The following is a 797-amino-acid chain: Calcium-transporting ATPase CtpE (797 aa).

Helical transmembrane passes span 55–75 (LLLIVLATGSLINGMFGLLII), 215–235 (ILQFITYLLVPAGLLTIYTQL), and 254–274 (VPMVPEGLVLMTSIAFAVGVV). The 4-aspartylphosphate intermediate role is filled by Asp-301. Mg(2+) contacts are provided by Asp-301, Thr-303, and Asp-536. Helical transmembrane passes span 601-621 (TVYSVLLALLVGIECLIAIPL), 633-653 (IHVTIAAWFTIGIPAFILSLA), 667-687 (VMTSAVPFGLVIGVATFVTYL), 703-723 (ASTAALITLLMTALWVLAVIA), 729-749 (WRLALVLASGLAYVVIFSLPL), and 764-784 (TSIALAVGVVGAATIEAMWWI).

This sequence belongs to the cation transport ATPase (P-type) (TC 3.A.3) family.

Its subcellular location is the cell membrane. The catalysed reaction is Ca(2+)(in) + ATP + H2O = Ca(2+)(out) + ADP + phosphate + H(+). In terms of biological role, P-type ATPase involved in specific uptake of calcium. The chain is Calcium-transporting ATPase CtpE (ctpE) from Mycobacterium bovis (strain ATCC BAA-935 / AF2122/97).